A 117-amino-acid chain; its full sequence is Large ribosomal subunit protein uL18 (117 aa).

This sequence belongs to the universal ribosomal protein uL18 family. Part of the 50S ribosomal subunit; part of the 5S rRNA/L5/L18/L25 subcomplex. Contacts the 5S and 23S rRNAs.

In terms of biological role, this is one of the proteins that bind and probably mediate the attachment of the 5S RNA into the large ribosomal subunit, where it forms part of the central protuberance. This Tolumonas auensis (strain DSM 9187 / NBRC 110442 / TA 4) protein is Large ribosomal subunit protein uL18.